A 371-amino-acid polypeptide reads, in one-letter code: MNEIAMNAPWPPHAGATTALASLQPTTGIRIEGVRKVYAARKSSAEVVALDGINLHVPKGSIQGVIGRSGAGKSTLIRLVNGLDKPSEGKVFVNDVEITSLSEPELRQARRSIGMVFQHFNLLSSRTAFGNVALPLEIAGTPKTEIEKRVLPLLDMVGLADKRDRYPAELSGGQKQRVGIARALATEPSVLLSDEATSALDPETTDQILDLLKQINRDLHLTILFITHEMAVVKALADRVAVIEGGRIVEEGSTFDVFATPRHEVTRRFVSSVTGSGAPDWLLAQPHEPPGGKAVLRITFKGSDANQPLLSHIARTLDIDINILSGQVEMIADHPFGTLIVSLTPSPDILRQVIAKLSTNNNLVEQLGYVA.

Residues 29–270 enclose the ABC transporter domain; it reads IRIEGVRKVY…PRHEVTRRFV (242 aa). 67-74 is a binding site for ATP; sequence GRSGAGKS.

This sequence belongs to the ABC transporter superfamily. Methionine importer (TC 3.A.1.24) family. As to quaternary structure, the complex is composed of two ATP-binding proteins (MetN), two transmembrane proteins (MetI) and a solute-binding protein (MetQ).

The protein localises to the cell inner membrane. The enzyme catalyses L-methionine(out) + ATP + H2O = L-methionine(in) + ADP + phosphate + H(+). It carries out the reaction D-methionine(out) + ATP + H2O = D-methionine(in) + ADP + phosphate + H(+). In terms of biological role, part of the ABC transporter complex MetNIQ involved in methionine import. Responsible for energy coupling to the transport system. The sequence is that of Methionine import ATP-binding protein MetN from Rhodopseudomonas palustris (strain BisA53).